The primary structure comprises 368 residues: 3-dehydroquinate synthase (368 aa).

NAD(+) is bound by residues 69-74, 103-107, 127-128, K140, and K149; these read DGEAYK, GVIGD, and TT. Residues E182, H245, and H262 each contribute to the Zn(2+) site.

The protein belongs to the sugar phosphate cyclases superfamily. Dehydroquinate synthase family. Requires Co(2+) as cofactor. Zn(2+) is required as a cofactor. It depends on NAD(+) as a cofactor.

Its subcellular location is the cytoplasm. It carries out the reaction 7-phospho-2-dehydro-3-deoxy-D-arabino-heptonate = 3-dehydroquinate + phosphate. It functions in the pathway metabolic intermediate biosynthesis; chorismate biosynthesis; chorismate from D-erythrose 4-phosphate and phosphoenolpyruvate: step 2/7. Catalyzes the conversion of 3-deoxy-D-arabino-heptulosonate 7-phosphate (DAHP) to dehydroquinate (DHQ). The protein is 3-dehydroquinate synthase of Pseudomonas paraeruginosa (strain DSM 24068 / PA7) (Pseudomonas aeruginosa (strain PA7)).